A 500-amino-acid polypeptide reads, in one-letter code: Probable cytosol aminopeptidase 1 (500 aa).

Positions 263 and 268 each coordinate Mn(2+). The active site involves Lys275. Mn(2+) is bound by residues Asp287, Asp346, and Glu348. Arg350 is an active-site residue.

The protein belongs to the peptidase M17 family. It depends on Mn(2+) as a cofactor.

It is found in the cytoplasm. The catalysed reaction is Release of an N-terminal amino acid, Xaa-|-Yaa-, in which Xaa is preferably Leu, but may be other amino acids including Pro although not Arg or Lys, and Yaa may be Pro. Amino acid amides and methyl esters are also readily hydrolyzed, but rates on arylamides are exceedingly low.. The enzyme catalyses Release of an N-terminal amino acid, preferentially leucine, but not glutamic or aspartic acids.. Presumably involved in the processing and regular turnover of intracellular proteins. Catalyzes the removal of unsubstituted N-terminal amino acids from various peptides. The polypeptide is Probable cytosol aminopeptidase 1 (pepA1) (Shewanella oneidensis (strain ATCC 700550 / JCM 31522 / CIP 106686 / LMG 19005 / NCIMB 14063 / MR-1)).